A 486-amino-acid chain; its full sequence is Glucose-6-phosphate 1-dehydrogenase (486 aa).

NADP(+)-binding positions include Gly13–Lys20, Arg47, Asp86–Val87, and Lys149. His179, Lys183, Glu217, and Asp236 together coordinate substrate. The Proton acceptor role is filled by His241. Positions 339 and 344 each coordinate substrate.

This sequence belongs to the glucose-6-phosphate dehydrogenase family. As to quaternary structure, homodimer.

It carries out the reaction D-glucose 6-phosphate + NAD(+) = 6-phospho-D-glucono-1,5-lactone + NADH + H(+). The enzyme catalyses D-glucose 6-phosphate + NADP(+) = 6-phospho-D-glucono-1,5-lactone + NADPH + H(+). Its pathway is carbohydrate degradation; pentose phosphate pathway; D-ribulose 5-phosphate from D-glucose 6-phosphate (oxidative stage): step 1/3. Its function is as follows. Catalyzes the oxidation of glucose 6-phosphate to 6-phosphogluconolactone. Can utilize either NADP(+) or NAD(+). In Leuconostoc mesenteroides, this protein is Glucose-6-phosphate 1-dehydrogenase.